Here is a 504-residue protein sequence, read N- to C-terminus: DnaJ homolog subfamily C member 3 (504 aa).

The signal sequence occupies residues 1–31 (MVAPGSVTSRLGSVFPFLLVLVDLQYEGAEC). 9 TPR repeats span residues 37 to 70 (VEKH…DPDN), 72 to 104 (IAYY…KMDF), 105 to 138 (TAAR…NPSE), 154 to 187 (MQRL…CVWD), 189 to 221 (ELRE…KNDN), 222 to 255 (TEAF…DQDH), 268 to 301 (LNKL…EPGV), 306 to 339 (IRSK…EPDN), and 340 to 373 (VNAL…NEND). A disulfide bridge links Cys248 with Cys258. At Ser274 the chain carries Phosphoserine. Cysteines 313 and 329 form a disulfide. The interval 375-393 (QIREGLEKAQRLLKQSQRR) is flexible linker. One can recognise a J domain in the interval 394–462 (DYYKILGVKR…EMRKKFDDGE (69 aa)). The interval 451–481 (DPEMRKKFDDGEDPLDAESQQGGGGNPFHRS) is disordered.

As to quaternary structure, interacts with EIF2AK4/GCN2; this interaction occurs under endoplasmic reticulum (ER) stress, hypothermic and amino acid starving stress conditions and inhibits EIF2AK4/GCN2 kinase activity. Interacts with EIF2AK3. Interacts with EIF2AK2. Forms a trimeric complex with DNAJB1 and HSPA8. Interacts with THAP12.

The protein resides in the endoplasmic reticulum. In terms of biological role, involved in the unfolded protein response (UPR) during endoplasmic reticulum (ER) stress. Acts as a negative regulator of the EIF2AK4/GCN2 kinase activity by preventing the phosphorylation of eIF-2-alpha at 'Ser-52' and hence attenuating general protein synthesis under ER stress, hypothermic and amino acid starving stress conditions. Co-chaperone of HSPA8/HSC70, it stimulates its ATPase activity. May inhibit both the autophosphorylation of EIF2AK2/PKR and the ability of EIF2AK2 to catalyze phosphorylation of the EIF2A. May inhibit EIF2AK3/PERK activity. This is DnaJ homolog subfamily C member 3 (DNAJC3) from Bos taurus (Bovine).